The sequence spans 275 residues: Probable endonuclease lcl3 (275 aa).

The interval 1-25 (MRWPPWASNTQASNNDHPTTTNNND) is disordered. A compositionally biased stretch (low complexity) spans 14-25 (NNDHPTTTNNND). The chain crosses the membrane as a helical span at residues 41-57 (LIPTLVLTTGILSAFTL). A TNase-like domain is found at 79-247 (RSILGKVTSV…KARGLGLWKG (169 aa)). R130 is a catalytic residue. Residue D135 coordinates Ca(2+). Residues E138 and R178 contribute to the active site.

It belongs to the LCL3 family.

Its subcellular location is the mitochondrion. It localises to the membrane. This Aspergillus niger (strain ATCC MYA-4892 / CBS 513.88 / FGSC A1513) protein is Probable endonuclease lcl3 (lcl3).